The chain runs to 686 residues: ATP-dependent zinc metalloprotease FtsH 1 (686 aa).

The Cytoplasmic portion of the chain corresponds to 1-33 (MCFCIVSSPEAMHSNADSPSSGPGLQPVWTTLR). The helical transmembrane segment at 34-54 (SPYVFWIGGAILLALLVHLGI) threads the bilayer. At 55 to 164 (KWQQASAPVR…TFAATQESDW (110 aa)) the chain is on the periplasmic side. The helical transmembrane segment at 165 to 185 (VGTLLLWGLPLGLIVGIWLFF) threads the bilayer. At 186–686 (MRRMATGGRE…AEGASPSSQG (501 aa)) the chain is on the cytoplasmic side. ATP is bound at residue 257-264 (GPPGTGKT). A Zn(2+)-binding site is contributed by His-479. The active site involves Glu-480. 2 residues coordinate Zn(2+): His-483 and Asp-555. The interval 661–686 (YAWLKEGDGTSRNSASAEGASPSSQG) is disordered. The span at 670–686 (TSRNSASAEGASPSSQG) shows a compositional bias: polar residues.

The protein in the central section; belongs to the AAA ATPase family. It in the C-terminal section; belongs to the peptidase M41 family. Homohexamer. Zn(2+) is required as a cofactor.

Its subcellular location is the cell inner membrane. Acts as a processive, ATP-dependent zinc metallopeptidase for both cytoplasmic and membrane proteins. Plays a role in the quality control of integral membrane proteins. This chain is ATP-dependent zinc metalloprotease FtsH 1, found in Salinibacter ruber (strain M8).